The following is a 2364-amino-acid chain: MSLVNKAQLQKMAYVKFRIQEDEYVAILNALEEYHNMSESSVVEKYLKLKDINNLTDNYLNTYKKSGRNKALKKFKEYLTMEVLELKNNSLTPVEKNLHFIWIGGQINDTAINYINQWKDVNSDYTVKVFYDSNAFLINTLKKTIVESATNNTLESFRENLNDPEFDYNKFYRKRMEIIYDKQKHFIDYYKSQIEENPEFIIDNIIKTYLSNEYSKDLEALNKYIEESLNKITANNGNDIRNLEKFADEDLVRLYNQELVERWNLAAASDILRISMLKEDGGVYLDVDMLPGIQPDLFKSINKPDSITDTSWEMIKLEAIMKYKEYIPGYTSKNFDMLDEEVQSSFESALSSTSDKSEIFLPLDDIKVSPLEVKIAFANNSVINQALISLKDSYGSDLVISQIKNRYKILNDNLNPAINEGNDFNTTMKTFNDNLVSISNEDNIMFMIKIADYLKVGFAPDVRSTINLSGPGVYTGAYQDLLMFKDNSINIHLLEPELRNFEFPKTKISQLTEQEITSLWSFNQARAKSQFEEYKKGYFEGALGEDDILDFSQNTVLDKDYVVEKISSSMRTPNKEYVHYIVQLQGDNVSYEAACNLFAKNPYYNILFQKNIENSETAYYYNLIYNKLQEIDKYRIPNLISNRHKIKLTFIGHGKSEFNTDTFANLDVNSLSSEIETILNLAKEDISPKSIEINLLGCNMFSYNVNVEETYPGKLLLKIKDIVSKLMPSISQDSITVSANQYEVRINKEGRRELLDHSGKWINKEESIIKDISSKEYISFNPKENKIIVKSKNLHELSTLLQEIKNNSNSSDIDLEKKVMLTECEINVASNIDTQIVEERIEEAKNLTSDSINYIKNEFKLIESISDALYDLKHQNGLDDSHFISFEDISKTENGFRIRFINKETGNSIFIETEKEIFSEYAAHISKEISNIKDTIFDNVNGKLVKKVNLDAAHEVNTLNSAFFIQSLIEYNTTKESLSNLSVAMKVQVYAQLFSTGLNTITDASKVVELVSTALDETIDLLPTLSEGLPIIATIIDGVSLGAAIKELSETNDPLLRQEIEAKIGIMAVNLTAASTAIVTSALGIASGFSILLVPLAGISAGIPSLVNNELILQDKATKVIDYFKHISLAETEGAFTLLDDKIIMPQDDLVLSEIDFNNNSITLGKCEIWRTEGGSGHTFTDDIDHFFSSPSITYRKPWLSIYDVLNIKKEKIDFSKDLMVLPNAPNRVFSYEMGWTPGFRSLDNDGTKLLDRIRDHYEGQFYWRYFAFIADALITKLKPRYEDTNVRINLDGNTRSFIVPVITTEQIRKNLSYSFYGSGGSYSLSLSPYNMNIDLNLVENDTWVIDVDNVVKNITIESDEIQKGELIENILSKLNIEDNKIVLNNHTINFYGAINESNRFISLTFSILEDINIIIEIDLVSKSYKILLSGNCIKLIENSSDIQQKIDHIGFNGEHQKYIPYSYIDNETKYNGFIDYSKKEGLFTAEFSNESIIRNIYMPDSNNLFIYSSKDLKDIRIINKGDVKLLIGNYFKDNMKVSLSFTIEDTNTIKLNGVYLDENGVAQILKFMNNAKSALNTSNSLMNFLESINIKNIFYNNLDPNIKFILDTNFIISGSNSIGQFELICDKDKNIQPYFIKFKIKETSYTLYAGNRQNLIVEPSYHLDDSGNISSTVINFSQKYLYGIDRYVNKVIITPNLYTDEINITPVYKPNYICPEVIILDANYINEKINININDLSIRYVWDNDGSDLILIANSEEDNQPQVKIRFVNVFKSDTAADKLSFNFSDKQDVSVSKIISTFSLAAYSDGVFDYEFGLVSLDNECFYINSFGNMVSGLIYINDSLYYFKPPKNNLITGFTTIDDNKYYFDPTKSGAASIGEITIDGKDYYFNKQGILQVGVINTSDGLKYFAPAGTLDENLEGESVNFIGKLNIDGKIYYFEDNYRAAVEWKSLDGETYYFNPKTGEALKGLHQIGDNKYYFDNNGIMQTGFITINDKVFYFNNDGVMQVGYIEVNGKYFYFGKNGERQLGVFNTPDGFKFFGPKDDDLGTEEGELTLYNGILNFNGKIYFFDISNTAVVGWGILDDGSTYYFDDNTAEACIGLTVINDCKYYFDDNGIRQLGFITINDNIFYFSESGKIELGYQNINGNYFYIDESGLVLIGVFDTPDGYKYFAPLNTVNDNIYGQAVEYSGLVRLNEDVYYFGETYKIETGWIENETDKYYFDPETKKAYKGINVVDDIKYYFDENGIMKTGLISFENNNYYFNEDGKMQFGYLNIKDKMFYFGKDGKMQIGVFNTPDGFKYFAHQNTLDENFEGESINYTGWLDLDGKRYYFTDEYIAATSSLTIDGYNYYFDPDTAELVVSE.

A four-helical bundle region spans residues 1–91 (MSLVNKAQLQ…EVLELKNNSL (91 aa)). A GT44 domain is found at 96–468 (KNLHFIWIGG…APDVRSTINL (373 aa)). The segment at 96-468 (KNLHFIWIGG…APDVRSTINL (373 aa)) is glucosyltransferase region. Residues 101 to 103 (IWI), Asn-139, 265 to 270 (LAAASD), and 286 to 288 (DVD) contribute to the UDP-alpha-D-glucose site. The Mg(2+) site is built by Asp-288, Glu-515, and Ser-518. Position 518–520 (518–520 (SLW)) interacts with UDP-alpha-D-glucose. The tract at residues 544–799 (GEDDILDFSQ…KSKNLHELST (256 aa)) is autoprocessing region. The Zn(2+) site is built by Glu-545 and Asp-546. Positions 567–774 (SSSMRTPNKE…EESIIKDISS (208 aa)) constitute a Peptidase C80 domain. Residues Tyr-577, Lys-600, and Lys-647 each coordinate 1D-myo-inositol hexakisphosphate. His-653 is a Zn(2+) binding site. The active-site For protease activity is His-653. Cys-698 (nucleophile; for protease activity) is an active-site residue. His-757 serves as a coordination point for Zn(2+). Residues Lys-764, Lys-775, and Lys-792 each coordinate 1D-myo-inositol hexakisphosphate. Positions 800 to 1500 (LLQEIKNNSN…ESIIRNIYMP (701 aa)) are translocation region. 5 interaction with host SEMA6A and SEMA6B regions span residues 1433–1438 (CIKLIE), 1466–1471 (DNETKY), 1484–1495 (FTAEFSNESIIR), 1504–1511 (NLFIYSSK), and 1596–1601 (YNNLDP). Cell wall-binding repeat units follow at residues 1833-1852 (VSGL…PKNN), 1854-1873 (ITGF…TKSG), 1876-1895 (SIGE…QGIL), 1926-1945 (FIGK…NYRA), 1946-1965 (AVEW…KTGE), 1967-1986 (LKGL…NGIM), 1987-2006 (QTGF…DGVM), 2007-2026 (QVGY…NGER), 2057-2076 (YNGI…SNTA), 2077-2097 (VVGW…NTAE), 2099-2118 (CIGL…NGIR), 2119-2138 (QLGF…SGKI), 2139-2158 (ELGY…SGLV), 2209-2224 (ETGW…YFDP), 2227-2249 (KKAY…NGIM), 2250-2269 (KTGL…DGKM), 2270-2289 (QFGY…DGKM), 2320-2339 (YTGW…EYIA), and 2340-2359 (ATSS…DTAE). Positions 1835 to 2364 (GLIYINDSLY…PDTAELVVSE (530 aa)) are receptor-binding (CROPS) region.

It belongs to the clostridial glucosylating toxin (LCGT) family. As to quaternary structure, homomultimer; forms an inactive homomultimer at pH 8, which dissociates at pH 4, leading to cytotoxicity. Interacts with host SEMA6A; interaction promotes toxin entry into host cell. Interacts with host SEMA6B; interaction promotes toxin entry into host cell. Requires Zn(2+) as cofactor. The cofactor is Mn(2+). Mg(2+) serves as cofactor. In terms of processing, undergoes autocatalytic cleavage to release the N-terminal part (Glucosyltransferase TcsL), which constitutes the active part of the toxin, in the host cytosol. 1D-myo-inositol hexakisphosphate-binding (InsP6) activates the peptidase C80 domain and promotes autoprocessing.

It is found in the secreted. It localises to the host endosome membrane. Its subcellular location is the host cytoplasm. The protein resides in the host cytosol. The protein localises to the host cell membrane. The catalysed reaction is L-threonyl-[protein] + UDP-alpha-D-glucose = 3-O-(alpha-D-glucosyl)-L-threonyl-[protein] + UDP + H(+). With respect to regulation, protease activity is activated upon binding to 1D-myo-inositol hexakisphosphate (InsP6), which induces conformational reorganization. In terms of biological role, precursor of a cytotoxin that targets the vascular endothelium, inducing an anti-inflammatory effect and resulting in lethal toxic shock syndrome. TcsL constitutes the main toxin that mediates the pathology of P.sordellii infection, an anaerobic Gram-positive bacterium found in soil and in the gastrointestinal and vaginal tracts of animals and humans; although the majority of carriers are asymptomatic, pathogenic P.sordellii infections arise rapidly and are highly lethal. This form constitutes the precursor of the toxin: it enters into host cells and mediates autoprocessing to release the active toxin (Glucosyltransferase TcsL) into the host cytosol. Targets vascular endothelium by binding to the semaphorin proteins SEMA6A and SEMA6B, and enters host cells via clathrin-mediated endocytosis. Once entered into host cells, acidification in the endosome promotes the membrane insertion of the translocation region and formation of a pore, leading to translocation of the GT44 and peptidase C80 domains across the endosomal membrane. This activates the peptidase C80 domain and autocatalytic processing, releasing the N-terminal part (Glucosyltransferase TcsL), which constitutes the active part of the toxin, in the cytosol. Functionally, active form of the toxin, which is released into the host cytosol following autoprocessing and inactivates small GTPases. Acts by mediating monoglucosylation of small GTPases of the Ras (H-Ras/HRAS, K-Ras/KRAS and N-Ras/NRAS) family in host cells at the conserved threonine residue located in the switch I region ('Thr-37/35'), using UDP-alpha-D-glucose as the sugar donor. Does not catalyze monoglucosylation of Ral/RALA. Also able to catalyze monoglucosylation of some members of the Rho family (Rac1 and Rap2A), but with less efficiency than with Ras proteins. Monoglucosylation of host small GTPases completely prevents the recognition of the downstream effector, blocking the GTPases in their inactive form and leading to apoptosis. Induces an anti-inflammatory effect, mainly by inactivating Ras proteins which results in blockage of the cell cycle and killing of immune cells. The absence or moderate local inflammatory response allows C.sordellii spreading in deep tissues, production of toxin which is released in the general circulation and causes a toxic shock syndrome. The protein is Cytotoxin-L of Paraclostridium sordellii (Clostridium sordellii).